The chain runs to 469 residues: Deoxyribodipyrimidine photo-lyase (469 aa).

The 133-residue stretch at 1–133 folds into the Photolyase/cryptochrome alpha/beta domain; sequence MRLVWFRRDL…IWSAFDDKCV (133 aa). (6R)-5,10-methylene-5,6,7,8-tetrahydrofolate is bound at residue glutamate 107.

It belongs to the DNA photolyase class-1 family. In terms of assembly, monomer. The cofactor is FAD. It depends on (6R)-5,10-methylene-5,6,7,8-tetrahydrofolate as a cofactor.

The catalysed reaction is cyclobutadipyrimidine (in DNA) = 2 pyrimidine residues (in DNA).. Involved in repair of UV radiation-induced DNA damage. Catalyzes the light-dependent monomerization (300-600 nm) of cyclobutyl pyrimidine dimers (in cis-syn configuration), which are formed between adjacent bases on the same DNA strand upon exposure to ultraviolet radiation. This chain is Deoxyribodipyrimidine photo-lyase (phrA), found in Vibrio cholerae serotype O1 (strain ATCC 39315 / El Tor Inaba N16961).